The sequence spans 515 residues: MAQARRPLMLIILDGWGYREVEEGNAVLSAGTPNLDRLVKDYPWCLLEASGGAVGLPEGMMGNSEDGHLNIGAGRIVYQNLTRINISIRNGDFFKNPVFLNAISKVKANDSSLHLIGLVSCGGVHSYTPHLHALIKLAKEKGLKKVYIHAFLDGRDVPPKTALGDIKKLNEFCKEHGGAKIATVSGRYYAMDRDKRWDRTKLAYDVLTLGASQYKAPNAETAVSEAYGRGETDEFVKPTVITDHEEKPVATIRDKDSVIFFNFRADRARQLTWAFVKDDFDGFVREKRPKIYFVCMARYDEDLDLPVAFPHEELKNVLGEVLSKQGLTQLRIAETEKYAHVTFFLNGGEEKRYEGEDRCLIPSPKIATYDLKPEMSAYKITDEVVRRIQSGKYDVIVLNFANMDMVGHTGIFEAAVKAVEAVDKCIGRIVEALKEIGGVALITADHGNAEQMIDSKTGEPHTAHTSNPVRCIYFGNGEVKALKKGKLCDLAPTLLELIGIPKPQEMTGKSLLVKE.

Mn(2+) is bound by residues D14 and S64. S64 serves as the catalytic Phosphoserine intermediate. Substrate-binding positions include H125, 155 to 156 (RD), R187, R193, 264 to 267 (RADR), and K337. Mn(2+)-binding residues include D404, H408, D445, H446, and H464.

The protein belongs to the BPG-independent phosphoglycerate mutase family. It depends on Mn(2+) as a cofactor.

The catalysed reaction is (2R)-2-phosphoglycerate = (2R)-3-phosphoglycerate. It functions in the pathway carbohydrate degradation; glycolysis; pyruvate from D-glyceraldehyde 3-phosphate: step 3/5. In terms of biological role, catalyzes the interconversion of 2-phosphoglycerate and 3-phosphoglycerate. This Methanosarcina acetivorans (strain ATCC 35395 / DSM 2834 / JCM 12185 / C2A) protein is 2,3-bisphosphoglycerate-independent phosphoglycerate mutase 1.